Here is a 148-residue protein sequence, read N- to C-terminus: SsrA-binding protein (148 aa).

The disordered stretch occupies residues 128–148; that stretch reads ESIAKKDQERNLKREFKNNNR.

The protein belongs to the SmpB family.

It is found in the cytoplasm. In terms of biological role, required for rescue of stalled ribosomes mediated by trans-translation. Binds to transfer-messenger RNA (tmRNA), required for stable association of tmRNA with ribosomes. tmRNA and SmpB together mimic tRNA shape, replacing the anticodon stem-loop with SmpB. tmRNA is encoded by the ssrA gene; the 2 termini fold to resemble tRNA(Ala) and it encodes a 'tag peptide', a short internal open reading frame. During trans-translation Ala-aminoacylated tmRNA acts like a tRNA, entering the A-site of stalled ribosomes, displacing the stalled mRNA. The ribosome then switches to translate the ORF on the tmRNA; the nascent peptide is terminated with the 'tag peptide' encoded by the tmRNA and targeted for degradation. The ribosome is freed to recommence translation, which seems to be the essential function of trans-translation. The polypeptide is SsrA-binding protein (Fusobacterium nucleatum subsp. nucleatum (strain ATCC 25586 / DSM 15643 / BCRC 10681 / CIP 101130 / JCM 8532 / KCTC 2640 / LMG 13131 / VPI 4355)).